A 246-amino-acid chain; its full sequence is Probable transcriptional regulatory protein HD_0596 (246 aa).

This sequence belongs to the TACO1 family.

It is found in the cytoplasm. The polypeptide is Probable transcriptional regulatory protein HD_0596 (Haemophilus ducreyi (strain 35000HP / ATCC 700724)).